The following is a 509-amino-acid chain: MRISKANAYVAAIDQGTTSTRCIFIDAQGKVVSSASKEHRQIFPQQGWVEHDPEEIWDNIRSVVSQAMVSIDITPHEVASLGVTNQRETTVVWDKHTGEPVYNAIVWQDTRTSDICLEIAGEEGQEKWLDRTGLLINSYPSGPKIKWILDNVEGARERAEKGDLLFGTMDTWVLWNLTGGVRGDDGDDAIHVTDVTNASRTLLMDLRTQQWDPELCEALDIPMSMLPEIRPSVGEFRSVRHRGTLADVPITGVLGDQQAALFGQGGFHEGAAKNTYGTGLFLLMNTGTSLKISEHGLLSTIAYQREGSAPVYALEGSVSMGGSLVQWLRDNLQLIPNAPAIENLAREVEDNGGVHVVPAFTGLFAPRWRPDARGVITGLTRFANRKHIARAVLEANAFQTREVVDAMAKDAGKALESLRVDGAMVENDLLMQMQADFLGIDVQRLEDVETTAVGVAFAAGLGSGFFKTTDEIEKLIAVKKVWNPDMSEEERERRYAEWNRAVEHSYDQA.

T17 serves as a coordination point for ADP. 3 residues coordinate ATP: T17, T18, and S19. T17 contributes to the sn-glycerol 3-phosphate binding site. R21 contributes to the ADP binding site. Sn-glycerol 3-phosphate is bound by residues R87, E88, Y139, and D256. Glycerol contacts are provided by R87, E88, Y139, D256, and Q257. Positions 278 and 322 each coordinate ADP. T278, G322, Q326, and A423 together coordinate ATP. The ADP site is built by A423 and N427.

Belongs to the FGGY kinase family.

The catalysed reaction is glycerol + ATP = sn-glycerol 3-phosphate + ADP + H(+). It functions in the pathway polyol metabolism; glycerol degradation via glycerol kinase pathway; sn-glycerol 3-phosphate from glycerol: step 1/1. Inhibited by fructose 1,6-bisphosphate (FBP). Functionally, key enzyme in the regulation of glycerol uptake and metabolism. Catalyzes the phosphorylation of glycerol to yield sn-glycerol 3-phosphate. This chain is Glycerol kinase, found in Corynebacterium glutamicum (strain R).